The sequence spans 418 residues: Tyrosine--tRNA ligase (418 aa).

An L-tyrosine-binding site is contributed by Tyr34. The 'HIGH' region signature appears at 39-48 (PTADSLHLGH). Residues Tyr169 and Gln173 each contribute to the L-tyrosine site. Residues 229 to 233 (KFGKS) carry the 'KMSKS' region motif. Position 232 (Lys232) interacts with ATP. In terms of domain architecture, S4 RNA-binding spans 352–418 (LNLVDMLVTA…GKKKYAVLTY (67 aa)).

This sequence belongs to the class-I aminoacyl-tRNA synthetase family. TyrS type 1 subfamily. As to quaternary structure, homodimer.

Its subcellular location is the cytoplasm. The catalysed reaction is tRNA(Tyr) + L-tyrosine + ATP = L-tyrosyl-tRNA(Tyr) + AMP + diphosphate + H(+). Catalyzes the attachment of tyrosine to tRNA(Tyr) in a two-step reaction: tyrosine is first activated by ATP to form Tyr-AMP and then transferred to the acceptor end of tRNA(Tyr). The protein is Tyrosine--tRNA ligase of Streptococcus pyogenes serotype M18 (strain MGAS8232).